The chain runs to 147 residues: MSNFTAEDKAAITSLWAKVNVEDAGGETLGRLLVVYPWTQRFFDSFGSLSSPSAIMGNPKVKAHGAKVLTSLGEAIKNLDDLKGTFGQLSELHCDKLHVDPENFRLLGNVLVTVLAVLHGKEFTPEVQASWQKMVAGVASALGSRYH.

A Globin domain is found at 3-147 (NFTAEDKAAI…VASALGSRYH (145 aa)). Heme b contacts are provided by histidine 64 and histidine 93.

This sequence belongs to the globin family. In terms of assembly, heterotetramer of two alpha chains and two gamma chains in fetal hemoglobin (Hb F). As to expression, red blood cells.

In terms of biological role, gamma chains make up the fetal hemoglobin F, in combination with alpha chains. The polypeptide is Hemoglobin subunit gamma (HBG) (Aotus azarae (Azara's night monkey)).